Here is an 800-residue protein sequence, read N- to C-terminus: DNA topoisomerase 4 subunit A (800 aa).

Positions 31–495 (LPDVRDGLKP…EIEEIKIDKE (465 aa)) constitute a Topo IIA-type catalytic domain. Tyrosine 119 (O-(5'-phospho-DNA)-tyrosine intermediate) is an active-site residue.

The protein belongs to the type II topoisomerase GyrA/ParC subunit family. ParC type 2 subfamily. As to quaternary structure, heterotetramer composed of ParC and ParE.

The protein localises to the cell membrane. It catalyses the reaction ATP-dependent breakage, passage and rejoining of double-stranded DNA.. In terms of biological role, topoisomerase IV is essential for chromosome segregation. It relaxes supercoiled DNA. Performs the decatenation events required during the replication of a circular DNA molecule. The sequence is that of DNA topoisomerase 4 subunit A from Staphylococcus aureus (strain Mu50 / ATCC 700699).